A 373-amino-acid chain; its full sequence is Phospho-N-acetylmuramoyl-pentapeptide-transferase (373 aa).

11 helical membrane passes run 16-36 (WWTKGSTSASLLGIVIFAASF), 46-66 (LLSLPLMISTLISVLIASWGI), 93-113 (PTMGGLLVVPVGLIIGSFVSV), 120-140 (QLLALSWITLAYMLIGGFDDW), 157-177 (LLLQTAASLIFLAWAGWQHWI), 185-205 (LGISIQMGFMIWPLALFVFLA), 216-236 (LDGLASGCGALVFTGLAVQLM), 242-262 (GNPVLAGFCMAMAGAWLGFLM), 270-290 (VFMGDTGSLAMGAALSGVAIL), 298-318 (LVMGGVFLAESLSVIIQVWVF), and 350-369 (MVVRRFWLSTGGLVLLGLLL).

Belongs to the glycosyltransferase 4 family. MraY subfamily. Mg(2+) serves as cofactor.

It is found in the cell inner membrane. The enzyme catalyses UDP-N-acetyl-alpha-D-muramoyl-L-alanyl-gamma-D-glutamyl-meso-2,6-diaminopimeloyl-D-alanyl-D-alanine + di-trans,octa-cis-undecaprenyl phosphate = di-trans,octa-cis-undecaprenyl diphospho-N-acetyl-alpha-D-muramoyl-L-alanyl-D-glutamyl-meso-2,6-diaminopimeloyl-D-alanyl-D-alanine + UMP. The protein operates within cell wall biogenesis; peptidoglycan biosynthesis. In terms of biological role, catalyzes the initial step of the lipid cycle reactions in the biosynthesis of the cell wall peptidoglycan: transfers peptidoglycan precursor phospho-MurNAc-pentapeptide from UDP-MurNAc-pentapeptide onto the lipid carrier undecaprenyl phosphate, yielding undecaprenyl-pyrophosphoryl-MurNAc-pentapeptide, known as lipid I. The sequence is that of Phospho-N-acetylmuramoyl-pentapeptide-transferase from Prochlorococcus marinus (strain MIT 9313).